The sequence spans 247 residues: MMDAVAPASDAGPDLAAIAADASGERAVGRPTVYVYEAPVRICHWVNAFSIIVLMVTGYLIGTPLPTVAGEASDNFVMGYIRFAHFAAGQVLAVFFLTRILWAFVGNHHSRQIFYIPVHRKQFWKEVLHEIRWYAFLEREPKMYVGHNPLAQTAMFTGFTLFVAFMIVTGFALYSEGQGIDSWQHKLFGWVFAIWPNSQDVHTWHHLGMWALVVFVMVHIYAAVREDIMSRQSIISSMISGERQFRD.

Helical transmembrane passes span 42–62 (ICHW…YLIG), 86–106 (FAAG…AFVG), 154–174 (AMFT…FALY), and 204–224 (WHHL…YAAV).

Belongs to the HupC/HyaC/HydC family.

It is found in the cell membrane. In terms of biological role, B-type cytochrome involved in electron transfer from hydrogenase to oxygen. In Bradyrhizobium diazoefficiens (strain JCM 10833 / BCRC 13528 / IAM 13628 / NBRC 14792 / USDA 110), this protein is Probable Ni/Fe-hydrogenase B-type cytochrome subunit (hupC).